The following is a 113-amino-acid chain: Large ribosomal subunit protein uL24 (113 aa).

It belongs to the universal ribosomal protein uL24 family. In terms of assembly, part of the 50S ribosomal subunit.

Functionally, one of two assembly initiator proteins, it binds directly to the 5'-end of the 23S rRNA, where it nucleates assembly of the 50S subunit. In terms of biological role, one of the proteins that surrounds the polypeptide exit tunnel on the outside of the subunit. The protein is Large ribosomal subunit protein uL24 of Rickettsia prowazekii (strain Madrid E).